The primary structure comprises 171 residues: Small ribosomal subunit protein uS5 (171 aa).

An S5 DRBM domain is found at 16-79 (LVERLVTVDR…EAAKRNMITV (64 aa)).

This sequence belongs to the universal ribosomal protein uS5 family. In terms of assembly, part of the 30S ribosomal subunit. Contacts proteins S4 and S8.

In terms of biological role, with S4 and S12 plays an important role in translational accuracy. Located at the back of the 30S subunit body where it stabilizes the conformation of the head with respect to the body. This Psychrobacter arcticus (strain DSM 17307 / VKM B-2377 / 273-4) protein is Small ribosomal subunit protein uS5.